The primary structure comprises 378 residues: 1-acyl-sn-glycerol-3-phosphate acyltransferase delta (378 aa).

A helical membrane pass occupies residues 11 to 31; that stretch reads FLCHLVFCYVFIASGLIVNAI. The HXXXXD motif motif lies at 96–101; it reads HKFEID. 3 consecutive transmembrane segments (helical) span residues 125–145, 311–331, and 338–358; these read ELAY…IFCT, WLFW…SMVS, and LASL…MIGV.

This sequence belongs to the 1-acyl-sn-glycerol-3-phosphate acyltransferase family. As to expression, expressed at a high levels in the brain, at intermediate or low levels in skeletal muscles, gut, kidney, spleen and lung. Barely detectable in heart and liver.

It is found in the endoplasmic reticulum membrane. The catalysed reaction is a 1-acyl-sn-glycero-3-phosphate + an acyl-CoA = a 1,2-diacyl-sn-glycero-3-phosphate + CoA. It carries out the reaction (4Z,7Z,10Z,13Z,16Z,19Z)-docosahexaenoyl-CoA + 1-hexadecanoyl-sn-glycero-3-phosphate = 1-hexadecanoyl-2-(4Z,7Z,10Z,13Z,16Z,19Z-docosahexaenoyl)-sn-glycero-3-phosphate + CoA. It catalyses the reaction 1-octadecanoyl-sn-glycero-3-phosphate + (9Z,12Z)-octadecadienoyl-CoA = 1-octadecanoyl-2-(9Z,12Z-octadecadienoyl)-sn-glycero-3-phosphate + CoA. The enzyme catalyses 1-octadecanoyl-sn-glycero-3-phosphate + (4Z,7Z,10Z,13Z,16Z,19Z)-docosahexaenoyl-CoA = 1-octadecanoyl-2-(4Z,7Z,10Z,13Z,16Z,19Z-docosahexaenoyl)-sn-glycero-3-phosphate + CoA. The catalysed reaction is (4Z,7Z,10Z,13Z,16Z,19Z)-docosahexaenoyl-CoA + 1-(9Z-octadecenoyl)-sn-glycero-3-phosphate = 1-(9Z-octadecenoyl)-2-(4Z,7Z,10Z,13Z,16Z,19Z-docosahexaenoyl)-sn-glycero-3-phosphate + CoA. It participates in phospholipid metabolism; CDP-diacylglycerol biosynthesis; CDP-diacylglycerol from sn-glycerol 3-phosphate: step 2/3. In terms of biological role, converts 1-acyl-sn-glycerol-3-phosphate (lysophosphatidic acid or LPA) into 1,2-diacyl-sn-glycerol-3-phosphate (phosphatidic acid or PA) by incorporating an acyl moiety at the sn-2 position of the glycerol backbone. Exhibits high acyl-CoA specificity for polyunsaturated fatty acyl-CoA, especially docosahexaenoyl-CoA (22:6-CoA, DHA-CoA). The protein is 1-acyl-sn-glycerol-3-phosphate acyltransferase delta (Agpat4) of Mus musculus (Mouse).